The primary structure comprises 224 residues: Glutathione S-transferase U1 (224 aa).

The GST N-terminal domain occupies 6–85 (ESVKLLGFWA…YIDQTWKNSP (80 aa)). Glutathione contacts are provided by residues 16–17 (SP), 42–43 (NK), 56–57 (KV), and 69–70 (ES). Positions 90–217 (DPYEKAMARF…EKQIERMTKI (128 aa)) constitute a GST C-terminal domain. Thr151 is subject to Phosphothreonine.

Belongs to the GST superfamily. Tau family.

Its subcellular location is the cytoplasm. It localises to the cytosol. The catalysed reaction is RX + glutathione = an S-substituted glutathione + a halide anion + H(+). Functionally, may be involved in the conjugation of reduced glutathione to a wide number of exogenous and endogenous hydrophobic electrophiles and have a detoxification role against certain herbicides. The chain is Glutathione S-transferase U1 (GSTU1) from Arabidopsis thaliana (Mouse-ear cress).